Reading from the N-terminus, the 241-residue chain is Phosphoribosylaminoimidazole-succinocarboxamide synthase (241 aa).

The protein belongs to the SAICAR synthetase family.

It carries out the reaction 5-amino-1-(5-phospho-D-ribosyl)imidazole-4-carboxylate + L-aspartate + ATP = (2S)-2-[5-amino-1-(5-phospho-beta-D-ribosyl)imidazole-4-carboxamido]succinate + ADP + phosphate + 2 H(+). Its pathway is purine metabolism; IMP biosynthesis via de novo pathway; 5-amino-1-(5-phospho-D-ribosyl)imidazole-4-carboxamide from 5-amino-1-(5-phospho-D-ribosyl)imidazole-4-carboxylate: step 1/2. The polypeptide is Phosphoribosylaminoimidazole-succinocarboxamide synthase (Methanoculleus marisnigri (strain ATCC 35101 / DSM 1498 / JR1)).